A 990-amino-acid chain; its full sequence is Bifunctional glutamine synthetase adenylyltransferase/adenylyl-removing enzyme (990 aa).

An adenylyl removase region spans residues 1–474; that stretch reads MPTDNENSMT…HFNELVEESQ (474 aa). The segment at 484–990 is adenylyl transferase; sequence FIACQDAWRL…WDTLFGTCSE (507 aa).

This sequence belongs to the GlnE family. Requires Mg(2+) as cofactor.

The enzyme catalyses [glutamine synthetase]-O(4)-(5'-adenylyl)-L-tyrosine + phosphate = [glutamine synthetase]-L-tyrosine + ADP. It catalyses the reaction [glutamine synthetase]-L-tyrosine + ATP = [glutamine synthetase]-O(4)-(5'-adenylyl)-L-tyrosine + diphosphate. In terms of biological role, involved in the regulation of glutamine synthetase GlnA, a key enzyme in the process to assimilate ammonia. When cellular nitrogen levels are high, the C-terminal adenylyl transferase (AT) inactivates GlnA by covalent transfer of an adenylyl group from ATP to specific tyrosine residue of GlnA, thus reducing its activity. Conversely, when nitrogen levels are low, the N-terminal adenylyl removase (AR) activates GlnA by removing the adenylyl group by phosphorolysis, increasing its activity. The regulatory region of GlnE binds the signal transduction protein PII (GlnB) which indicates the nitrogen status of the cell. This Alteromonas mediterranea (strain DSM 17117 / CIP 110805 / LMG 28347 / Deep ecotype) protein is Bifunctional glutamine synthetase adenylyltransferase/adenylyl-removing enzyme.